An 81-amino-acid polypeptide reads, in one-letter code: MQTAYWVMVMMMVWITAPLSEGGKPNDVIRGLVPDDLTPQLILRSLISRRRSDKDVREGYKCVWKTCMPALWRRHDLKGKD.

An N-terminal signal peptide occupies residues Met-1 to Gly-22. The propeptide occupies Gly-23 to Arg-57. 4-carboxyglutamate is present on Glu-58. Cys-62 and Cys-67 are oxidised to a cystine. Trp-64 carries the D-tryptophan modification. Pro-69 is modified (4-hydroxyproline). Residues Leu-71–Asp-81 constitute a propeptide that is removed on maturation.

The protein belongs to the conotoxin C superfamily. Consomatin family. Expressed by the venom duct.

The protein localises to the secreted. Functionally, moderately activates human somatostatin receptors (SSTR) with a preferential activation of SSTR1 and SSTR4. In vivo, does not cause behavioral changes in mice within a few minutes of intracranial injection, but causes a progressive loss of movement thereafter. Four to five hours after injection, mice recover, even with the highest dose tested. Shows antinociception and antihyperalgesia activities in two mouse models of acute pain, most probably by acting outside the central nervous system. The protein is Consomatin Le1 of Conus lenavati (Cone snail).